The primary structure comprises 342 residues: Eukaryotic translation initiation factor 3 subunit F (342 aa).

The MPN domain occupies 30-166; sequence VAIQPQAVFS…SRTYISAPIG (137 aa). A disordered region spans residues 310–342; sequence TDALAGDGQKDGGDRKQGGDRRNKGRQQRTQEA. Residues 317-331 show a composition bias toward basic and acidic residues; the sequence is GQKDGGDRKQGGDRR.

Belongs to the eIF-3 subunit F family. As to quaternary structure, component of the eukaryotic translation initiation factor 3 (eIF-3) complex.

The protein resides in the cytoplasm. In terms of biological role, component of the eukaryotic translation initiation factor 3 (eIF-3) complex, which is involved in protein synthesis of a specialized repertoire of mRNAs and, together with other initiation factors, stimulates binding of mRNA and methionyl-tRNAi to the 40S ribosome. The eIF-3 complex specifically targets and initiates translation of a subset of mRNAs involved in cell proliferation. The chain is Eukaryotic translation initiation factor 3 subunit F from Phaeosphaeria nodorum (strain SN15 / ATCC MYA-4574 / FGSC 10173) (Glume blotch fungus).